The following is a 459-amino-acid chain: NADH-ubiquinone oxidoreductase chain 4 (459 aa).

Transmembrane regions (helical) follow at residues 20-42 (PKWLWSATTTHSLIIASLSLTLF), 61-81 (MISTPLIILTCWLLPLMIIAS), 103-123 (LQALLIMAFSATEIILFYIMF), 148-168 (IYFLFYTLAGSLPLLVALLYL), 194-214 (FLWVACVTAFLVKMPLYGVHL), 224-244 (PVAGSMILAAILLKLGGYGMI), 257-277 (LAYPFIILALWGIIMTGSICM), 284-303 (SLIAYSSVSHMGLVASGILI), 307-329 (WGFTGAIILMIAHGLTSSALFCL), 350-370 (IILPLMATWWFIMSLANMALP), 392-414 (TILLTGTGTLITASYSLYLYMSS), and 435-455 (LLLTLHIIPIILLMIKPELIW).

The protein belongs to the complex I subunit 4 family.

It is found in the mitochondrion membrane. The enzyme catalyses a ubiquinone + NADH + 5 H(+)(in) = a ubiquinol + NAD(+) + 4 H(+)(out). Core subunit of the mitochondrial membrane respiratory chain NADH dehydrogenase (Complex I) that is believed to belong to the minimal assembly required for catalysis. Complex I functions in the transfer of electrons from NADH to the respiratory chain. The immediate electron acceptor for the enzyme is believed to be ubiquinone. In Polypterus ornatipinnis (Ornate bichir), this protein is NADH-ubiquinone oxidoreductase chain 4 (MT-ND4).